We begin with the raw amino-acid sequence, 362 residues long: 3-dehydroquinate synthase (362 aa).

This sequence belongs to the archaeal-type DHQ synthase family.

It carries out the reaction 2-amino-2,3,7-trideoxy-D-lyxo-hept-6-ulosonate + NAD(+) + H2O = 3-dehydroquinate + NH4(+) + NADH + H(+). In terms of biological role, catalyzes the oxidative deamination and cyclization of 2-amino-3,7-dideoxy-D-threo-hept-6-ulosonic acid (ADH) to yield 3-dehydroquinate (DHQ), which is fed into the canonical shikimic pathway of aromatic amino acid biosynthesis. This chain is 3-dehydroquinate synthase, found in Methanothrix thermoacetophila (strain DSM 6194 / JCM 14653 / NBRC 101360 / PT) (Methanosaeta thermophila).